Here is an 881-residue protein sequence, read N- to C-terminus: Valine--tRNA ligase (881 aa).

Positions 49 to 59 match the 'HIGH' region motif; sequence PNVTGKLHLGH. Residues 526–530 carry the 'KMSKS' region motif; that stretch reads KMSKS. ATP is bound at residue lysine 529. The stretch at 810–881 forms a coiled coil; the sequence is LADLINLDEE…VRQRLADLEK (72 aa).

The protein belongs to the class-I aminoacyl-tRNA synthetase family. ValS type 1 subfamily. In terms of assembly, monomer.

Its subcellular location is the cytoplasm. It carries out the reaction tRNA(Val) + L-valine + ATP = L-valyl-tRNA(Val) + AMP + diphosphate. Functionally, catalyzes the attachment of valine to tRNA(Val). As ValRS can inadvertently accommodate and process structurally similar amino acids such as threonine, to avoid such errors, it has a 'posttransfer' editing activity that hydrolyzes mischarged Thr-tRNA(Val) in a tRNA-dependent manner. The protein is Valine--tRNA ligase of Bacillus cereus (strain ATCC 14579 / DSM 31 / CCUG 7414 / JCM 2152 / NBRC 15305 / NCIMB 9373 / NCTC 2599 / NRRL B-3711).